We begin with the raw amino-acid sequence, 363 residues long: 3-dehydroquinate synthase (363 aa).

NAD(+)-binding positions include 134-135 (TT), Lys147, and Lys156. Residues Glu189, His254, and His271 each contribute to the Zn(2+) site.

The protein belongs to the sugar phosphate cyclases superfamily. Dehydroquinate synthase family. Co(2+) is required as a cofactor. Zn(2+) serves as cofactor. The cofactor is NAD(+).

The protein resides in the cytoplasm. It carries out the reaction 7-phospho-2-dehydro-3-deoxy-D-arabino-heptonate = 3-dehydroquinate + phosphate. It functions in the pathway metabolic intermediate biosynthesis; chorismate biosynthesis; chorismate from D-erythrose 4-phosphate and phosphoenolpyruvate: step 2/7. In terms of biological role, catalyzes the conversion of 3-deoxy-D-arabino-heptulosonate 7-phosphate (DAHP) to dehydroquinate (DHQ). The protein is 3-dehydroquinate synthase of Prochlorococcus marinus (strain AS9601).